The sequence spans 437 residues: Ribulose bisphosphate carboxylase-like protein (437 aa).

The active-site Proton acceptor is the Lys176. Residues Lys202, Asp204, and Glu205 each coordinate Mg(2+). Lys202 carries the post-translational modification N6-carboxylysine. The Proton acceptor role is filled by His293.

It belongs to the RuBisCO large chain family. Type IV subfamily. Homodimer. Requires Mg(2+) as cofactor.

Functionally, may be involved in sulfur metabolism and oxidative stress response. Does not show RuBisCO activity. This Archaeoglobus fulgidus (strain ATCC 49558 / DSM 4304 / JCM 9628 / NBRC 100126 / VC-16) protein is Ribulose bisphosphate carboxylase-like protein.